The sequence spans 93 residues: YcgL domain-containing protein Shew_2183 (93 aa).

In terms of domain architecture, YcgL spans 1–85 (MICAVYKSRL…PPVNLLEEYK (85 aa)).

The sequence is that of YcgL domain-containing protein Shew_2183 from Shewanella loihica (strain ATCC BAA-1088 / PV-4).